A 351-amino-acid polypeptide reads, in one-letter code: Phosphate acyltransferase (351 aa).

It belongs to the PlsX family. Homodimer. Probably interacts with PlsY.

It localises to the cytoplasm. It carries out the reaction a fatty acyl-[ACP] + phosphate = an acyl phosphate + holo-[ACP]. The protein operates within lipid metabolism; phospholipid metabolism. Catalyzes the reversible formation of acyl-phosphate (acyl-PO(4)) from acyl-[acyl-carrier-protein] (acyl-ACP). This enzyme utilizes acyl-ACP as fatty acyl donor, but not acyl-CoA. The polypeptide is Phosphate acyltransferase (Neisseria meningitidis serogroup B (strain ATCC BAA-335 / MC58)).